The primary structure comprises 108 residues: Glutaredoxin-1 (108 aa).

Positions 3–106 (EEFVQQRLAN…DILSSIGVLR (104 aa)) constitute a Glutaredoxin domain. Cysteines 23 and 26 form a disulfide.

This sequence belongs to the glutaredoxin family.

It is found in the virion. Has thioltransferase and dehydroascorbate reductase activities. This chain is Glutaredoxin-1 (OPG075), found in Ectromelia virus (strain Moscow) (ECTV).